A 397-amino-acid chain; its full sequence is Ribosomal RNA large subunit methyltransferase I (397 aa).

The PUA domain maps to 2–80 (SAAIYLVKGR…QDINRAFFVK (79 aa)).

This sequence belongs to the methyltransferase superfamily. RlmI family.

The protein resides in the cytoplasm. It carries out the reaction cytidine(1962) in 23S rRNA + S-adenosyl-L-methionine = 5-methylcytidine(1962) in 23S rRNA + S-adenosyl-L-homocysteine + H(+). Specifically methylates the cytosine at position 1962 (m5C1962) of 23S rRNA. This Vibrio vulnificus (strain CMCP6) protein is Ribosomal RNA large subunit methyltransferase I.